The primary structure comprises 450 residues: Glucose-6-phosphate isomerase (450 aa).

The Proton donor role is filled by glutamate 290. Active-site residues include histidine 311 and lysine 425.

This sequence belongs to the GPI family.

It localises to the cytoplasm. It carries out the reaction alpha-D-glucose 6-phosphate = beta-D-fructose 6-phosphate. It functions in the pathway carbohydrate biosynthesis; gluconeogenesis. It participates in carbohydrate degradation; glycolysis; D-glyceraldehyde 3-phosphate and glycerone phosphate from D-glucose: step 2/4. In terms of biological role, catalyzes the reversible isomerization of glucose-6-phosphate to fructose-6-phosphate. This is Glucose-6-phosphate isomerase from Alkaliphilus metalliredigens (strain QYMF).